The chain runs to 333 residues: Phospholipid phosphatase-related protein type 1 (333 aa).

3 helical membrane-spanning segments follow: residues 12 to 32, 66 to 86, and 126 to 146; these read IIPC…LLAY, FIQP…IIFV, and FIGV…AGQV. N-linked (GlcNAc...) asparagine glycosylation occurs at N162. Transmembrane regions (helical) follow at residues 200 to 217, 223 to 243, and 256 to 276; these read ASLS…ITST, SRLA…LTGL, and VVAG…CVVN.

The protein belongs to the PA-phosphatase related phosphoesterase family.

It is found in the cell membrane. The protein localises to the cell projection. It localises to the neuron projection. May play a role in neurite outgrowth and neurogenesis. The polypeptide is Phospholipid phosphatase-related protein type 1 (plppr1) (Danio rerio (Zebrafish)).